We begin with the raw amino-acid sequence, 137 residues long: Glutamate mutase sigma subunit (137 aa).

A B12-binding domain is found at 3–137; that stretch reads KKTIVLGVIG…ADLKKDLNIE (135 aa). Residues 13 to 17, histidine 16, 61 to 63, and 93 to 97 each bind adenosylcob(III)alamin; these read SDCHA, SSL, and NIVVG.

The protein belongs to the methylaspartate mutase GlmS subunit family. In terms of assembly, heterotetramer composed of 2 epsilon subunits (GlmE) and 2 sigma subunits (GlmS). GlmE exists as a homodimer and GlmS as a monomer. Adenosylcob(III)alamin serves as cofactor.

It carries out the reaction (2S,3S)-3-methyl-L-aspartate = L-glutamate. Its pathway is amino-acid degradation; L-glutamate degradation via mesaconate pathway; acetate and pyruvate from L-glutamate: step 1/4. With respect to regulation, competitively inhibited by (2S,4S)-4-fluoroglutamate, 2-methyleneglutarate, (2R,3RS)-3-fluoroglutamate and (S)-3-methylitaconate. In terms of biological role, catalyzes the carbon skeleton rearrangement of L-glutamate to L-threo-3-methylaspartate ((2S,3S)-3-methylaspartate). In Clostridium cochlearium, this protein is Glutamate mutase sigma subunit.